The sequence spans 332 residues: Glycerol-3-phosphate dehydrogenase [NAD(P)+] (332 aa).

The NADPH site is built by Ser-11, Phe-12, Lys-32, and Lys-106. Positions 106, 137, and 139 each coordinate sn-glycerol 3-phosphate. Ala-141 contributes to the NADPH binding site. 5 residues coordinate sn-glycerol 3-phosphate: Lys-192, Asp-245, Ser-255, Arg-256, and Asn-257. Lys-192 acts as the Proton acceptor in catalysis. Arg-256 is an NADPH binding site. Residues Val-280 and Glu-282 each coordinate NADPH.

This sequence belongs to the NAD-dependent glycerol-3-phosphate dehydrogenase family.

The protein resides in the cytoplasm. The catalysed reaction is sn-glycerol 3-phosphate + NAD(+) = dihydroxyacetone phosphate + NADH + H(+). It carries out the reaction sn-glycerol 3-phosphate + NADP(+) = dihydroxyacetone phosphate + NADPH + H(+). Its pathway is membrane lipid metabolism; glycerophospholipid metabolism. Catalyzes the reduction of the glycolytic intermediate dihydroxyacetone phosphate (DHAP) to sn-glycerol 3-phosphate (G3P), the key precursor for phospholipid synthesis. The polypeptide is Glycerol-3-phosphate dehydrogenase [NAD(P)+] (Staphylococcus aureus (strain bovine RF122 / ET3-1)).